Reading from the N-terminus, the 232-residue chain is Ribonuclease 3 (232 aa).

The 132-residue stretch at 6–137 folds into the RNase III domain; it reads QEMLKRDFNI…FIGALYLDQG (132 aa). Residue Glu50 coordinates Mg(2+). Asp54 is an active-site residue. Mg(2+) is bound by residues Asp123 and Glu126. Residue Glu126 is part of the active site. Positions 163–232 constitute a DRBM domain; the sequence is DNKTELQEVL…AYQALKKLRK (70 aa).

The protein belongs to the ribonuclease III family. In terms of assembly, homodimer. Requires Mg(2+) as cofactor.

The protein resides in the cytoplasm. The catalysed reaction is Endonucleolytic cleavage to 5'-phosphomonoester.. Functionally, digests double-stranded RNA. Involved in the processing of primary rRNA transcript to yield the immediate precursors to the large and small rRNAs (23S and 16S). Processes some mRNAs, and tRNAs when they are encoded in the rRNA operon. Processes pre-crRNA and tracrRNA of type II CRISPR loci if present in the organism. This chain is Ribonuclease 3, found in Ligilactobacillus salivarius (strain UCC118) (Lactobacillus salivarius).